We begin with the raw amino-acid sequence, 33 residues long: Gastrin (33 aa).

Glutamine 1 is modified (pyrrolidone carboxylic acid). Phenylalanine amide is present on phenylalanine 33.

This sequence belongs to the gastrin/cholecystokinin family.

Its subcellular location is the secreted. Its function is as follows. Gastrin stimulates the stomach mucosa to produce and secrete hydrochloric acid and the pancreas to secrete its digestive enzymes. It also stimulates smooth muscle contraction and increases blood circulation and water secretion in the stomach and intestine. This chain is Gastrin (GAST), found in Cavia porcellus (Guinea pig).